Here is a 380-residue protein sequence, read N- to C-terminus: Cytochrome b (380 aa).

4 helical membrane-spanning segments follow: residues 34 to 54 (FGSLLGICLLTQILTGLLLAM), 78 to 99 (WLIRNLHANGASFFFICIYLHI), 114 to 134 (WNTGVILLLTLMATAFVGYVL), and 179 to 199 (FFALHFLLPFMITGLTTIHLT). Heme b contacts are provided by histidine 84 and histidine 98. Histidine 183 and histidine 197 together coordinate heme b. Histidine 202 contributes to the a ubiquinone binding site. 4 helical membrane-spanning segments follow: residues 227-247 (LKDFLGFTLMLLPLTTLALFS), 289-309 (LGGVLALAASVLILFLAPFLH), 321-341 (ISQLLFWILVTNLLILTWVGS), and 348-368 (FIIIGQLASITYFTILLILFP).

The protein belongs to the cytochrome b family. In terms of assembly, the cytochrome bc1 complex contains 11 subunits: 3 respiratory subunits (MT-CYB, CYC1 and UQCRFS1), 2 core proteins (UQCRC1 and UQCRC2) and 6 low-molecular weight proteins (UQCRH/QCR6, UQCRB/QCR7, UQCRQ/QCR8, UQCR10/QCR9, UQCR11/QCR10 and a cleavage product of UQCRFS1). This cytochrome bc1 complex then forms a dimer. It depends on heme b as a cofactor.

Its subcellular location is the mitochondrion inner membrane. Functionally, component of the ubiquinol-cytochrome c reductase complex (complex III or cytochrome b-c1 complex) that is part of the mitochondrial respiratory chain. The b-c1 complex mediates electron transfer from ubiquinol to cytochrome c. Contributes to the generation of a proton gradient across the mitochondrial membrane that is then used for ATP synthesis. This is Cytochrome b (MT-CYB) from Pelecanoides urinatrix (Common diving petrel).